Reading from the N-terminus, the 548-residue chain is Eukaryotic translation initiation factor 3 subunit D (548 aa).

Lys-53 carries the N6-acetyllysine modification. Phosphoserine is present on Ser-161. The tract at residues 285–299 (DFDLPTVSETANEPP) is RNA gate. Disordered stretches follow at residues 288–309 (LPTVSETANEPPQDEGNSFNSP) and 523–548 (PDGTFSSDEDEEEEEEEEEEEEEEET). Over residues 291–309 (VSETANEPPQDEGNSFNSP) the composition is skewed to polar residues. 2 positions are modified to phosphoserine: Ser-528 and Ser-529. Residues 529–548 (SDEDEEEEEEEEEEEEEEET) are compositionally biased toward acidic residues.

This sequence belongs to the eIF-3 subunit D family. As to quaternary structure, component of the eukaryotic translation initiation factor 3 (eIF-3) complex, which is composed of 13 subunits: EIF3A, EIF3B, EIF3C, EIF3D, EIF3E, EIF3F, EIF3G, EIF3H, EIF3I, EIF3J, EIF3K, EIF3L and EIF3M. The eIF-3 complex appears to include 3 stable modules: module A is composed of EIF3A, EIF3B, EIF3G and EIF3I; module B is composed of EIF3F, EIF3H, and EIF3M; and module C is composed of EIF3C, EIF3D, EIF3E, EIF3K and EIF3L. EIF3C of module C binds EIF3B of module A and EIF3H of module B, thereby linking the three modules. EIF3J is a labile subunit that binds to the eIF-3 complex via EIF3B. The eIF-3 complex interacts with RPS6KB1 under conditions of nutrient depletion. Mitogenic stimulation leads to binding and activation of a complex composed of MTOR and RPTOR, leading to phosphorylation and release of RPS6KB1 and binding of EIF4B to eIF-3.

The protein resides in the cytoplasm. MRNA cap-binding component of the eukaryotic translation initiation factor 3 (eIF-3) complex, a complex required for several steps in the initiation of protein synthesis of a specialized repertoire of mRNAs. The eIF-3 complex associates with the 40S ribosome and facilitates the recruitment of eIF-1, eIF-1A, eIF-2:GTP:methionyl-tRNAi and eIF-5 to form the 43S pre-initiation complex (43S PIC). The eIF-3 complex stimulates mRNA recruitment to the 43S PIC and scanning of the mRNA for AUG recognition. The eIF-3 complex is also required for disassembly and recycling of post-termination ribosomal complexes and subsequently prevents premature joining of the 40S and 60S ribosomal subunits prior to initiation. The eIF-3 complex specifically targets and initiates translation of a subset of mRNAs involved in cell proliferation, including cell cycling, differentiation and apoptosis, and uses different modes of RNA stem-loop binding to exert either translational activation or repression. In the eIF-3 complex, EIF3D specifically recognizes and binds the 7-methylguanosine cap of a subset of mRNAs. This Pongo abelii (Sumatran orangutan) protein is Eukaryotic translation initiation factor 3 subunit D.